Reading from the N-terminus, the 189-residue chain is Dual specificity phosphatase 21 (189 aa).

Positions Gly-20–Ser-161 constitute a Tyrosine-protein phosphatase domain. Residues Ser-43–Leu-128 form a sufficient for mitochondrial localization region. Cys-105 acts as the Phosphocysteine intermediate in catalysis.

It belongs to the protein-tyrosine phosphatase family. Non-receptor class dual specificity subfamily. In terms of assembly, microtubule inner protein component of sperm flagellar doublet microtubules. As to expression, selectively expressed in testis.

It localises to the cytoplasm. Its subcellular location is the nucleus. The protein resides in the mitochondrion inner membrane. The protein localises to the cytoskeleton. It is found in the flagellum axoneme. It carries out the reaction O-phospho-L-tyrosyl-[protein] + H2O = L-tyrosyl-[protein] + phosphate. The catalysed reaction is O-phospho-L-seryl-[protein] + H2O = L-seryl-[protein] + phosphate. The enzyme catalyses O-phospho-L-threonyl-[protein] + H2O = L-threonyl-[protein] + phosphate. Protein phosphatase component of the sperm flagellar doublet microtubules. May act as a regulator of sperm motility by mediating dephosphorylation of sperm doublet microtubule proteins. Can dephosphorylate single and diphosphorylated synthetic MAPK peptides, with preference for the phosphotyrosine and diphosphorylated forms over phosphothreonine. This is Dual specificity phosphatase 21 from Mus musculus (Mouse).